Here is a 165-residue protein sequence, read N- to C-terminus: Transcription antitermination protein NusB (165 aa).

This sequence belongs to the NusB family.

Functionally, involved in transcription antitermination. Required for transcription of ribosomal RNA (rRNA) genes. Binds specifically to the boxA antiterminator sequence of the ribosomal RNA (rrn) operons. The protein is Transcription antitermination protein NusB of Rhodococcus erythropolis (strain PR4 / NBRC 100887).